A 631-amino-acid polypeptide reads, in one-letter code: 1-deoxy-D-xylulose-5-phosphate synthase (631 aa).

Thiamine diphosphate-binding positions include His-73 and 114 to 116 (GHS). Asp-145 is a Mg(2+) binding site. Thiamine diphosphate contacts are provided by residues 146 to 147 (GA), Asn-174, Tyr-285, and Glu-366. Asn-174 lines the Mg(2+) pocket.

The protein belongs to the transketolase family. DXPS subfamily. As to quaternary structure, homodimer. Mg(2+) is required as a cofactor. The cofactor is thiamine diphosphate.

It carries out the reaction D-glyceraldehyde 3-phosphate + pyruvate + H(+) = 1-deoxy-D-xylulose 5-phosphate + CO2. It participates in metabolic intermediate biosynthesis; 1-deoxy-D-xylulose 5-phosphate biosynthesis; 1-deoxy-D-xylulose 5-phosphate from D-glyceraldehyde 3-phosphate and pyruvate: step 1/1. In terms of biological role, catalyzes the acyloin condensation reaction between C atoms 2 and 3 of pyruvate and glyceraldehyde 3-phosphate to yield 1-deoxy-D-xylulose-5-phosphate (DXP). In Desulfitobacterium hafniense (strain DSM 10664 / DCB-2), this protein is 1-deoxy-D-xylulose-5-phosphate synthase.